The chain runs to 264 residues: Indole-3-glycerol phosphate synthase (264 aa).

It belongs to the TrpC family.

The enzyme catalyses 1-(2-carboxyphenylamino)-1-deoxy-D-ribulose 5-phosphate + H(+) = (1S,2R)-1-C-(indol-3-yl)glycerol 3-phosphate + CO2 + H2O. Its pathway is amino-acid biosynthesis; L-tryptophan biosynthesis; L-tryptophan from chorismate: step 4/5. The protein is Indole-3-glycerol phosphate synthase of Xylella fastidiosa (strain M23).